We begin with the raw amino-acid sequence, 325 residues long: Glutarate 2-hydroxylase (325 aa).

H160, D162, and H292 together coordinate Fe cation.

Belongs to the glutarate hydroxylase family. In terms of assembly, homotetramer. Fe(2+) is required as a cofactor.

The enzyme catalyses glutarate + 2-oxoglutarate + O2 = (S)-2-hydroxyglutarate + succinate + CO2. Its pathway is amino-acid degradation. Functionally, acts as an alpha-ketoglutarate-dependent dioxygenase catalyzing hydroxylation of glutarate (GA) to L-2-hydroxyglutarate (L2HG). Functions in a L-lysine degradation pathway that proceeds via cadaverine, glutarate and L-2-hydroxyglutarate. The protein is Glutarate 2-hydroxylase of Escherichia coli O6:K15:H31 (strain 536 / UPEC).